The sequence spans 490 residues: GTPase Der (490 aa).

EngA-type G domains follow at residues 3–166 (PVVA…MDDV) and 203–376 (IKLA…DSST). Residues 9–16 (GRPNVGKS), 56–60 (DTGGI), 118–121 (NKTD), 209–216 (GRPNVGKS), 256–260 (DTAGV), and 321–324 (NKWD) each bind GTP. The KH-like domain occupies 377–461 (RRVSTAMLTR…PIRIQFKEGE (85 aa)).

It belongs to the TRAFAC class TrmE-Era-EngA-EngB-Septin-like GTPase superfamily. EngA (Der) GTPase family. Associates with the 50S ribosomal subunit.

Its function is as follows. GTPase that plays an essential role in the late steps of ribosome biogenesis. The sequence is that of GTPase Der from Salmonella typhi.